The sequence spans 482 residues: Protein translocase subunit SecY (482 aa).

Residues 1-22 (MVIKKPANKVDKKSTFKSSNKK) form a disordered region. The next 10 membrane-spanning stretches (helical) occupy residues 41-61 (ILFTLLALIIIRLGVYITVPG), 92-112 (FSILALGVSPYITASIIVQLL), 137-157 (LTKIIMIPFALMQAEATIFTL), 177-197 (AFYYILIPLVMLGGSFFMLWI), 201-221 (ITIKGIGNGISIVIFIGIIIS), 243-263 (IFFSGLLNFMIYISVFLLVIL), 303-323 (VIPVIFASAIISTPITISQII), 342-362 (FNTWWGISIFGILIVLFTFLY), 405-425 (VVGSVFLAIIALLPYVISKLT), and 426-446 (QLPSNLAIGGTGLIICISVAI).

Belongs to the SecY/SEC61-alpha family. Component of the Sec protein translocase complex. Heterotrimer consisting of SecY, SecE and SecG subunits. The heterotrimers can form oligomers, although 1 heterotrimer is thought to be able to translocate proteins. Interacts with the ribosome. Interacts with SecDF, and other proteins may be involved. Interacts with SecA.

The protein resides in the cell membrane. Its function is as follows. The central subunit of the protein translocation channel SecYEG. Consists of two halves formed by TMs 1-5 and 6-10. These two domains form a lateral gate at the front which open onto the bilayer between TMs 2 and 7, and are clamped together by SecE at the back. The channel is closed by both a pore ring composed of hydrophobic SecY resides and a short helix (helix 2A) on the extracellular side of the membrane which forms a plug. The plug probably moves laterally to allow the channel to open. The ring and the pore may move independently. This Mycoplasma capricolum subsp. capricolum (strain California kid / ATCC 27343 / NCTC 10154) protein is Protein translocase subunit SecY.